A 3961-amino-acid chain; its full sequence is Replicase polyprotein 1ab (3961 aa).

A C4-type; atypical zinc finger spans residues 8-28 (CTCTPNARVFVAEGQVYCTRC). Residues 69–180 (ECSPTGACWL…EDFCPFECAM (112 aa)) enclose the Peptidase C31 domain. Residues 69-182 (ECSPTGACWL…FCPFECAMAD (114 aa)) are PCP1-alpha. Residues cysteine 76 and histidine 146 each act as for Nsp1-alpha papain-like cysteine proteinase activity in the active site. The tract at residues 199–200 (VS) is important for host EIF2AK2 inhibition. The PCP1-beta stretch occupies residues 263 to 382 (DTVPEGNCWW…IFRFGSHKWY (120 aa)). Residues 263–383 (DTVPEGNCWW…FRFGSHKWYG (121 aa)) form the Peptidase C32 domain. Catalysis depends on for Nsp1-beta papain-like cysteine proteinase activity residues cysteine 270 and histidine 339. The tract at residues 426 to 513 (LKLYSPPAEG…GEHWTVSVNP (88 aa)) is OTU-like. A Peptidase C33 domain is found at 428–535 (LYSPPAEGNC…QGCCEHKGGL (108 aa)). Residues cysteine 437 and histidine 506 each act as for Nsp2 cysteine proteinase activity in the active site. A compositionally biased stretch (pro residues) spans 810-819 (WTPPPPPPRV). 3 disordered regions span residues 810-875 (WTPP…FPTP), 899-918 (TPLD…SRPM), and 1148-1191 (TGEL…PADT). A run of 7 helical transmembrane segments spans residues 1266–1286 (FCLF…LGVF), 1296–1316 (GVFG…SDPV), 1368–1388 (VWHF…GAYV), 1583–1603 (LVAA…GVYV), 1648–1668 (LTAL…LIFV), 1685–1705 (CILL…LCVF), and 1719–1739 (ILWL…LAVV). The tract at residues 1266 to 1388 (FCLFLCYSYP…ADCILAGAYV (123 aa)) is HD1. The tract at residues 1583–1745 (LVAALHVACS…LAVVLLVSLW (163 aa)) is HD2. Residues 1810-2013 (GAFRTQKPSL…ALLAAKPELE (204 aa)) enclose the Peptidase S32 domain. Active-site charge relay system; for 3C-like serine proteinase activity residues include histidine 1848, aspartate 1873, and serine 1927. Helical transmembrane passes span 2036–2056 (WTPL…AVLV), 2060–2080 (FSFG…VLMI), 2092–2112 (LSLG…LAVT), 2137–2157 (SPVP…LYLF), and 2162–2182 (LHYV…RYFA). Residues 2036 to 2157 (WTPLVAVGFF…HLLAIILYLF (122 aa)) are HD3. The NiRAN domain occupies 2488–2651 (IIDKLQGLTK…LPYKLYPVRG (164 aa)). A RdRp catalytic domain is found at 2890 to 3024 (GRCLEADLAS…YAESPSMPNY (135 aa)). The 64-residue stretch at 3145–3208 (GKKSRMCGYC…PPLGKGTSPL (64 aa)) folds into the AV ZBD domain. Residues cysteine 3151, cysteine 3154, cysteine 3164, cysteine 3169, histidine 3172, histidine 3174, histidine 3176, histidine 3178, cysteine 3185, histidine 3187, cysteine 3194, and cysteine 3197 each coordinate Zn(2+). The 153-residue stretch at 3265-3417 (ASTALLPTCK…VFDIMPQTQL (153 aa)) folds into the (+)RNA virus helicase ATP-binding domain. An ATP-binding site is contributed by 3293-3300 (GPPGAGKT). In terms of domain architecture, (+)RNA virus helicase C-terminal spans 3418 to 3546 (KTIWRFGQNI…AVHRDEQLIV (129 aa)). The AV-Nsp11N/CoV-Nsp15M domain occupies 3585-3681 (EGSSSPLPKV…LTKFVRGEAQ (97 aa)). The NendoU domain maps to 3683–3805 (LPETVFSTGR…MVWKGKTAYF (123 aa)). Active-site residues include histidine 3714, histidine 3729, and lysine 3758.

It belongs to the arteriviridae polyprotein family. As to quaternary structure, nsp1-alpha papain-like: Interacts with host RNF31. Interacts with host EIF2AK2; this interaction occurs in host stress granules and leads to EIF2AK2 inhibition. Interacts with host G3BP1; this interaction probably plays a role in Nsp1-beta-mediated inhibition of host EIF2AK2. In terms of assembly, interacts with host DDX18; this interaction redistributes host DDX18 to the cytoplasm. As to quaternary structure, interacts with host IFITM1. Interacts with host DDX5. In terms of assembly, interacts with host OTULIN. As to quaternary structure, interacts with host LGALS3. Specific enzymatic cleavages in vivo by its own proteases yield mature proteins. Nsp1 is autocleaved into two subunits, Nsp1-alpha and Nsp1-beta. There are two alternative pathways for processing. Either nsp4-5 is cleaved, which represents the major pathway or the nsp5-6 and nsp6-7 are processed, which represents the minor pathway. The major pathway occurs when nsp2 acts as a cofactor for nsp4.

It localises to the host nucleus. Its subcellular location is the host cytoplasm. The protein resides in the host membrane. The protein localises to the host endoplasmic reticulum. It is found in the host perinuclear region. It catalyses the reaction RNA(n) + a ribonucleoside 5'-triphosphate = RNA(n+1) + diphosphate. The enzyme catalyses ATP + H2O = ADP + phosphate + H(+). The catalysed reaction is Thiol-dependent hydrolysis of ester, thioester, amide, peptide and isopeptide bonds formed by the C-terminal Gly of ubiquitin (a 76-residue protein attached to proteins as an intracellular targeting signal).. It carries out the reaction uridylyl-uridylyl-ribonucleotide-RNA = a 3'-end uridylyl-2',3'-cyclophospho-uridine-RNA + a 5'-end dephospho-ribonucleoside-RNA. Contains the activities necessary for the transcription of negative stranded RNA, leader RNA, subgenomic mRNAs and progeny virion RNA as well as proteinases responsible for the cleavage of the polyprotein into functional products. Its function is as follows. Inhibits host IFN-beta production. Plays a role in the degradation of the host transcriptional activator CREBBP protein. The degradation of host CREBBP which is a key component of the IFN enhanceosome is likely responsible for the inhibition of interferon mediated by Nsp1-alpha. Also participates in the inhibition of host NF-kappa-B activation by counteracting LUBAC-dependent induction of NF-kappa-B. Reduces host NEMO ubiquitination by blocking the interaction between the two LUBAC complex components RNF31 and SHARPIN. Functionally, plays a role in blocking host mRNA nuclear export to the cytoplasm and subversion of host protein synthesis. Additionally, inhibits the interferon-activated JAK/STAT signal transduction by mediating the ubiquitination and subsequent proteasomal degradation of host KPNA1. Repurposes the host antiviral stress granules into a proviral platform to counteract the EIF2AK2/PKR restriction, thereby regulating the host inflammatory response. In terms of biological role, multifunctional protein that acts as a viral protease and as a viral antagonist of host immune response. Cleaves the nsp2/nsp3 site in the viral polyprotein. Displays deubiquitinating activity that cleaves both ubiquitinated and ISGylated products and therefore inhibits ubiquitin and ISG15-dependent host innate immunity. Also deubiquinates host NFKBIA, thereby interfering with NFKBIA degradation and impairing subsequent NF-kappa-B activation. Plays a role in the inhibition of the immune response by interacting with host IFITM1. This interaction leads to the proteasomal degradation of the IFN-induced antiviral protein IFITM1. Its function is as follows. Cleaves the majority of cleavage sites present in the C-terminus of the polyprotein. Triggers host apoptosis through caspase-3, -8, and -9 activations. Subverts host innate immune responses through its protease activity. Targets the NF-kappa-B essential modulator NEMO and mediates its cleavage. Blocks host interferon beta induction and downstream signaling by cleaving mitochondrial MAVS, dislodging it from the mitochondria. Impairs host defense by cleaving host mRNA-decapping enzyme DCP1A to attenuate its antiviral activity. Functionally, plays a role in the initial induction of autophagosomes from host endoplasmic reticulum. In terms of biological role, plays a role in the inhibition of host STAT3 signaling pathway by inducing the degradation of STAT3. Responsible for replication and transcription of the viral RNA genome. Its function is as follows. Displays RNA and DNA duplex-unwinding activities with 5' to 3' polarity. Functionally, plays a role in viral transcription/replication and prevents the simultaneous activation of host cell dsRNA sensors, such as MDA5/IFIH1, OAS, PKR and NLRP3 inflammasome. Acts by degrading the 5'-polyuridines generated during replication of the poly(A) region of viral genomic and subgenomic RNAs. Catalyzes a two-step reaction in which a 2'3'-cyclic phosphate (2'3'-cP) is first generated by 2'-O transesterification, which is then hydrolyzed to a 3'-phosphate (3'-P). If not degraded, poly(U) RNA would hybridize with poly(A) RNA tails and activate host dsRNA sensors. Also plays a role in the inhibition of host type I interferon production by recruiting host OTULIN to promote removal of linear ubiquitination targeting host NEMO. The sequence is that of Replicase polyprotein 1ab (rep) from Porcine reproductive and respiratory syndrome virus (strain HB-1) (PRRSV).